A 236-amino-acid chain; its full sequence is Transmembrane protein 70 homolog, mitochondrial (236 aa).

A mitochondrion-targeting transit peptide spans 1–64 (MLGLRAMLPK…WLSVKSTKTE (64 aa)). 2 helical membrane-spanning segments follow: residues 83–103 (MVKF…PILL) and 116–136 (VFLC…LHFI).

The protein belongs to the TMEM70 family. Associates with mitochondrial complex I assembly intermediates during its biogenesis.

The protein resides in the mitochondrion membrane. Its function is as follows. Scaffold protein that participates in the c-ring assembly of mitochondrial ATP synthase (F(1)F(0) ATP synthase or complex V). Also binds the mitochondrial proton-transporting ATP synthase complex I and may play a role in the stability of its membrane-bound subassemblies. In Drosophila melanogaster (Fruit fly), this protein is Transmembrane protein 70 homolog, mitochondrial.